The chain runs to 524 residues: Bifunctional purine biosynthesis protein PurH (524 aa).

In terms of domain architecture, MGS-like spans 1–154 (MTRLALLSTS…KNHAHVTVLC (154 aa)).

This sequence belongs to the PurH family.

It carries out the reaction (6R)-10-formyltetrahydrofolate + 5-amino-1-(5-phospho-beta-D-ribosyl)imidazole-4-carboxamide = 5-formamido-1-(5-phospho-D-ribosyl)imidazole-4-carboxamide + (6S)-5,6,7,8-tetrahydrofolate. It catalyses the reaction IMP + H2O = 5-formamido-1-(5-phospho-D-ribosyl)imidazole-4-carboxamide. It functions in the pathway purine metabolism; IMP biosynthesis via de novo pathway; 5-formamido-1-(5-phospho-D-ribosyl)imidazole-4-carboxamide from 5-amino-1-(5-phospho-D-ribosyl)imidazole-4-carboxamide (10-formyl THF route): step 1/1. Its pathway is purine metabolism; IMP biosynthesis via de novo pathway; IMP from 5-formamido-1-(5-phospho-D-ribosyl)imidazole-4-carboxamide: step 1/1. The polypeptide is Bifunctional purine biosynthesis protein PurH (Acaryochloris marina (strain MBIC 11017)).